The following is a 663-amino-acid chain: UvrABC system protein B (663 aa).

The Helicase ATP-binding domain maps to 30–417 (EGIKAGKRHQ…TDKMVEQIIR (388 aa)). Position 43–50 (43–50 (GATGTGKT)) interacts with ATP. Positions 96–119 (YYDYYQPEAYVPSTDTFIEKDASI) match the Beta-hairpin motif. Residues 434 to 600 (QIDDLLSEIQ…TINKKIHDLI (167 aa)) form the Helicase C-terminal domain. The 36-residue stretch at 627-662 (QKTIDNIEKEMKQAAKDLDFEKATELRDMLFELKAE) folds into the UVR domain.

The protein belongs to the UvrB family. In terms of assembly, forms a heterotetramer with UvrA during the search for lesions. Interacts with UvrC in an incision complex.

Its subcellular location is the cytoplasm. In terms of biological role, the UvrABC repair system catalyzes the recognition and processing of DNA lesions. A damage recognition complex composed of 2 UvrA and 2 UvrB subunits scans DNA for abnormalities. Upon binding of the UvrA(2)B(2) complex to a putative damaged site, the DNA wraps around one UvrB monomer. DNA wrap is dependent on ATP binding by UvrB and probably causes local melting of the DNA helix, facilitating insertion of UvrB beta-hairpin between the DNA strands. Then UvrB probes one DNA strand for the presence of a lesion. If a lesion is found the UvrA subunits dissociate and the UvrB-DNA preincision complex is formed. This complex is subsequently bound by UvrC and the second UvrB is released. If no lesion is found, the DNA wraps around the other UvrB subunit that will check the other stand for damage. This chain is UvrABC system protein B, found in Staphylococcus aureus (strain COL).